Reading from the N-terminus, the 67-residue chain is Large ribosomal subunit protein uL29 (67 aa).

It belongs to the universal ribosomal protein uL29 family.

The chain is Large ribosomal subunit protein uL29 from Desulfitobacterium hafniense (strain DSM 10664 / DCB-2).